A 74-amino-acid polypeptide reads, in one-letter code: MVDVLRFYLCLLCRFLHALTVTFLSDIFVWLVAKTRSIQAVIILHVASIERAYSNHQVNWSYIFQSAISKAIRG.

Residues 15–32 (FLHALTVTFLSDIFVWLV) form a helical membrane-spanning segment.

The protein resides in the membrane. This is an uncharacterized protein from Saccharomyces cerevisiae (strain ATCC 204508 / S288c) (Baker's yeast).